A 330-amino-acid chain; its full sequence is Ferredoxin--NADP reductase (330 aa).

Residues Glu-35, Gln-43, Tyr-48, Val-90, Phe-123, Asp-285, and Thr-326 each coordinate FAD.

It belongs to the ferredoxin--NADP reductase type 2 family. As to quaternary structure, homodimer. The cofactor is FAD.

The enzyme catalyses 2 reduced [2Fe-2S]-[ferredoxin] + NADP(+) + H(+) = 2 oxidized [2Fe-2S]-[ferredoxin] + NADPH. The sequence is that of Ferredoxin--NADP reductase from Streptococcus pyogenes serotype M28 (strain MGAS6180).